The primary structure comprises 310 residues: Ribosomal RNA small subunit methyltransferase H (310 aa).

S-adenosyl-L-methionine is bound by residues 40-42 (GGH), D59, F89, D104, and Q111.

The protein belongs to the methyltransferase superfamily. RsmH family.

Its subcellular location is the cytoplasm. The catalysed reaction is cytidine(1402) in 16S rRNA + S-adenosyl-L-methionine = N(4)-methylcytidine(1402) in 16S rRNA + S-adenosyl-L-homocysteine + H(+). Functionally, specifically methylates the N4 position of cytidine in position 1402 (C1402) of 16S rRNA. The chain is Ribosomal RNA small subunit methyltransferase H from Amoebophilus asiaticus (strain 5a2).